The sequence spans 664 residues: NAD(P)H-quinone oxidoreductase chain 5 (664 aa).

16 helical membrane-spanning segments follow: residues 7-27 (YAWLIPVLPLLGAMVIGIGLI), 39-59 (LNAVFVLSLIGTSMALSFGLL), 91-111 (HLSALMSVIVTTVALLVMIYT), 120-140 (GYVRFYAYLSIFSSSMLGLVF), 144-164 (LVQVYIFWELVGMCSYLLIGF), 187-207 (FGLLLGMLGLYWATGSFEFDL), 219-239 (GQISSLLAIVFAVLVFLGPVA), 258-278 (TPISALIHAATMVAAGVFLVA), 290-310 (AMNVIAWTGATTAFLGATIAL), 327-347 (LGYMVMAMGIGGYTAGLFHLM), 352-372 (FKAMLFLGSGSVIHGMEEVVG), 395-415 (ATTFLIGTLAICGIPPFAGFW), 420-440 (ILGLAFEANPVLWFIGWATAG), 495-515 (FPLMALAVPSVLIGLLGVPWG), 541-561 (FLIMGGNSVGIALIGITIASL), and 643-663 (VQFYALIVFGAVLGFVIFFSV).

It belongs to the complex I subunit 5 family.

Its subcellular location is the cell membrane. The catalysed reaction is a plastoquinone + NADH + (n+1) H(+)(in) = a plastoquinol + NAD(+) + n H(+)(out). It carries out the reaction a plastoquinone + NADPH + (n+1) H(+)(in) = a plastoquinol + NADP(+) + n H(+)(out). In terms of biological role, NDH-1 shuttles electrons from NAD(P)H, via FMN and iron-sulfur (Fe-S) centers, to quinones in the respiratory chain. The immediate electron acceptor for the enzyme in this species is believed to be plastoquinone. Couples the redox reaction to proton translocation (for every two electrons transferred, four hydrogen ions are translocated across the cytoplasmic membrane), and thus conserves the redox energy in a proton gradient. This chain is NAD(P)H-quinone oxidoreductase chain 5 (ndhF), found in Picosynechococcus sp. (strain ATCC 27264 / PCC 7002 / PR-6) (Agmenellum quadruplicatum).